The sequence spans 931 residues: ORF4 polyprotein (931 aa).

In terms of processing, proteolytic processing of ORF4 polyprotein yields the VP4a, VP4b and VP4c capsid proteins.

It is found in the virion. Functionally, ORF4 polyprotein codes for VP4a, VP4b, and VP4c, three of the four proteins that self-assemble to form the icosahedral capsid. The capsid is made of VP3 (coded by ORF3), VP4a, VP4b and VP4c. In Drosophila melanogaster (Fruit fly), this protein is ORF4 polyprotein.